A 427-amino-acid chain; its full sequence is Glucose-1-phosphate adenylyltransferase (427 aa).

Residues Tyr121, Gly186, 201–202 (EK), and Ser219 each bind alpha-D-glucose 1-phosphate.

The protein belongs to the bacterial/plant glucose-1-phosphate adenylyltransferase family. In terms of assembly, homotetramer.

The catalysed reaction is alpha-D-glucose 1-phosphate + ATP + H(+) = ADP-alpha-D-glucose + diphosphate. Its pathway is glycan biosynthesis; glycogen biosynthesis. In terms of biological role, involved in the biosynthesis of ADP-glucose, a building block required for the elongation reactions to produce glycogen. Catalyzes the reaction between ATP and alpha-D-glucose 1-phosphate (G1P) to produce pyrophosphate and ADP-Glc. The chain is Glucose-1-phosphate adenylyltransferase from Corynebacterium diphtheriae (strain ATCC 700971 / NCTC 13129 / Biotype gravis).